We begin with the raw amino-acid sequence, 21 residues long: 20 kDa chaperonin, chloroplastic (21 aa).

It belongs to the GroES chaperonin family. As to quaternary structure, forms stable complexes with CPN60 in the presence of ATP.

The protein localises to the plastid. The protein resides in the chloroplast. In terms of biological role, seems to function only as a co-chaperone, along with cpn60, and in certain cases is essential for the discharge of biologically active proteins from cpn60. The protein is 20 kDa chaperonin, chloroplastic (CPN21) of Pisum sativum (Garden pea).